The chain runs to 94 residues: Large ribosomal subunit protein bL27 (94 aa).

The propeptide occupies 1–10; the sequence is MQFLFNIQLF.

The protein belongs to the bacterial ribosomal protein bL27 family. Post-translationally, the N-terminus is cleaved by ribosomal processing cysteine protease Prp.

This chain is Large ribosomal subunit protein bL27, found in Fusobacterium nucleatum subsp. nucleatum (strain ATCC 25586 / DSM 15643 / BCRC 10681 / CIP 101130 / JCM 8532 / KCTC 2640 / LMG 13131 / VPI 4355).